Consider the following 258-residue polypeptide: MYSSYSLSKRLIYVPILAIQFLLVRSVSSLNLTNEYLNHKCFVSEGKYKHGDKYENNLNVLNKNVLSYDLTSGFLHVSHGEGPDSVTIILQCRGDSFGSNCRSCYTTAIDGFHRRCQRNKGGIIWYDQCFLVISTIKPQLPRKIDFKNTFSMHNPNNVSSEPGSFDKMTRDFLYKLVQKASYPTVVEHQSTYYAAGEKKLGKRKLYAMMQCASDILQCKVCLEWCIRELPKCCDGKQGGRILGMSCNLRYELYPFLRR.

An N-terminal signal peptide occupies residues 1-29 (MYSSYSLSKRLIYVPILAIQFLLVRSVSS). Gnk2-homologous domains follow at residues 36–138 (YLNH…TIKP) and 146–255 (FKNT…LYPF).

Belongs to the cysteine-rich repeat secretory protein family.

It is found in the secreted. The protein is Putative cysteine-rich repeat secretory protein 35 (CRRSP35) of Arabidopsis thaliana (Mouse-ear cress).